We begin with the raw amino-acid sequence, 660 residues long: Epithelial sodium channel subunit gamma (660 aa).

The Cytoplasmic segment spans residues M1–W55. A helical membrane pass occupies residues I56–L76. The Extracellular portion of the chain corresponds to M77–Q537. Disulfide bonds link C101-C286, C209-C217, C263-C270, C375-C460, C397-C456, C401-C452, C410-C437, and C412-C426. A helical transmembrane segment spans residues L538–I558. The Cytoplasmic portion of the chain corresponds to D559–L660.

This sequence belongs to the amiloride-sensitive sodium channel (TC 1.A.6) family. SCNN1G subfamily. Component of the heterotrimeric epithelial sodium channel (ENaC) composed of an alpha/SCNN1A, a beta/SCNN1B and a gamma/SCNN1G subunit.

Its subcellular location is the apical cell membrane. The catalysed reaction is Na(+)(in) = Na(+)(out). Originally identified and characterized by its inhibition by the diuretic drug amiloride. Functionally, this is one of the three pore-forming subunits of the heterotrimeric epithelial sodium channel (ENaC), a critical regulator of sodium balance and fluid homeostasis. ENaC operates in epithelial tissues, where it mediates the electrodiffusion of sodium ions from extracellular fluid through the apical membrane of cells, with water following osmotically. This chain is Epithelial sodium channel subunit gamma (scnn1g-a), found in Xenopus laevis (African clawed frog).